The primary structure comprises 264 residues: 3-methyl-2-oxobutanoate hydroxymethyltransferase (264 aa).

The Mg(2+) site is built by Asp45 and Asp84. 3-methyl-2-oxobutanoate contacts are provided by residues 45 to 46, Asp84, and Lys112; that span reads DS. Glu114 is a Mg(2+) binding site. The active-site Proton acceptor is Glu181.

Belongs to the PanB family. In terms of assembly, homodecamer; pentamer of dimers. It depends on Mg(2+) as a cofactor.

It localises to the cytoplasm. It carries out the reaction 3-methyl-2-oxobutanoate + (6R)-5,10-methylene-5,6,7,8-tetrahydrofolate + H2O = 2-dehydropantoate + (6S)-5,6,7,8-tetrahydrofolate. Its pathway is cofactor biosynthesis; (R)-pantothenate biosynthesis; (R)-pantoate from 3-methyl-2-oxobutanoate: step 1/2. Catalyzes the reversible reaction in which hydroxymethyl group from 5,10-methylenetetrahydrofolate is transferred onto alpha-ketoisovalerate to form ketopantoate. The protein is 3-methyl-2-oxobutanoate hydroxymethyltransferase of Shewanella frigidimarina (strain NCIMB 400).